The sequence spans 387 residues: uncharacterized protein (387 aa).

This sequence to M.jannaschii MJ0043 N-terminal region.

This is an uncharacterized protein from Bacillus subtilis (strain 168).